Here is a 219-residue protein sequence, read N- to C-terminus: MKKTDWSQPLRNRLAEGYFPKMIEFINQTYQEGKIYPPENQIFRAIELTPLAQTKVIIVGQDPYPQPGKAQGLAFSYPATFKVNRPDSIVNIQKELREEGFSKEDSDLTAWAEQGVLLLNAVLTVPEFASNAHAGKIWEPLTDEIIKIASDDERPKVFILWGGFARKKAKLIDGSKHLILEAAHPSPLSASRGFFGSHPFSKTNDFLVQTGQSPIDWSK.

Catalysis depends on D62, which acts as the Proton acceptor.

It belongs to the uracil-DNA glycosylase (UDG) superfamily. UNG family.

The protein localises to the cytoplasm. The catalysed reaction is Hydrolyzes single-stranded DNA or mismatched double-stranded DNA and polynucleotides, releasing free uracil.. Excises uracil residues from the DNA which can arise as a result of misincorporation of dUMP residues by DNA polymerase or due to deamination of cytosine. This Lactococcus lactis subsp. cremoris (strain MG1363) protein is Uracil-DNA glycosylase.